A 98-amino-acid polypeptide reads, in one-letter code: NADH-ubiquinone oxidoreductase chain 4L (98 aa).

3 helical membrane-spanning segments follow: residues 1–21 (MSMV…GMLV), 29–49 (SLLC…VTIL), and 61–81 (IVLL…LVMV).

The protein belongs to the complex I subunit 4L family. In terms of assembly, core subunit of respiratory chain NADH dehydrogenase (Complex I) which is composed of 45 different subunits.

It localises to the mitochondrion inner membrane. The enzyme catalyses a ubiquinone + NADH + 5 H(+)(in) = a ubiquinol + NAD(+) + 4 H(+)(out). Core subunit of the mitochondrial membrane respiratory chain NADH dehydrogenase (Complex I) which catalyzes electron transfer from NADH through the respiratory chain, using ubiquinone as an electron acceptor. Part of the enzyme membrane arm which is embedded in the lipid bilayer and involved in proton translocation. The sequence is that of NADH-ubiquinone oxidoreductase chain 4L (MT-ND4L) from Canis latrans (Coyote).